The sequence spans 63 residues: MARKCEICGKSPATGNTVAKSKVTTRRVWKPNLQKIRVVTDEGTVRRMYVCTKCLKSGKVQKA.

Belongs to the bacterial ribosomal protein bL28 family.

The sequence is that of Large ribosomal subunit protein bL28 from Petrotoga mobilis (strain DSM 10674 / SJ95).